Here is a 256-residue protein sequence, read N- to C-terminus: tRNA (guanine-N(7)-)-methyltransferase (256 aa).

The tract at residues 17–45 (TCETVPGLPQKKHYRQRAHSNPHSDHDIE) is disordered. The segment covering 26–36 (QKKHYRQRAHS) has biased composition (basic residues). Residues Gly-74, 97–98 (EI), 132–133 (NA), and Leu-152 contribute to the S-adenosyl-L-methionine site. Asp-155 is an active-site residue. An S-adenosyl-L-methionine-binding site is contributed by 230 to 232 (TEE).

It belongs to the class I-like SAM-binding methyltransferase superfamily. TrmB family.

The protein localises to the nucleus. It carries out the reaction guanosine(46) in tRNA + S-adenosyl-L-methionine = N(7)-methylguanosine(46) in tRNA + S-adenosyl-L-homocysteine. It functions in the pathway tRNA modification; N(7)-methylguanine-tRNA biosynthesis. Functionally, catalyzes the formation of N(7)-methylguanine at position 46 (m7G46) in tRNA. In Caenorhabditis elegans, this protein is tRNA (guanine-N(7)-)-methyltransferase.